A 376-amino-acid chain; its full sequence is Succinyl-diaminopimelate desuccinylase (376 aa).

Residue His-67 participates in Zn(2+) binding. Residue Asp-69 is part of the active site. Position 100 (Asp-100) interacts with Zn(2+). The active-site Proton acceptor is the Glu-134. Zn(2+) is bound by residues Glu-135, Glu-163, and His-349.

This sequence belongs to the peptidase M20A family. DapE subfamily. Homodimer. Requires Zn(2+) as cofactor. It depends on Co(2+) as a cofactor.

The catalysed reaction is N-succinyl-(2S,6S)-2,6-diaminopimelate + H2O = (2S,6S)-2,6-diaminopimelate + succinate. Its pathway is amino-acid biosynthesis; L-lysine biosynthesis via DAP pathway; LL-2,6-diaminopimelate from (S)-tetrahydrodipicolinate (succinylase route): step 3/3. Its function is as follows. Catalyzes the hydrolysis of N-succinyl-L,L-diaminopimelic acid (SDAP), forming succinate and LL-2,6-diaminopimelate (DAP), an intermediate involved in the bacterial biosynthesis of lysine and meso-diaminopimelic acid, an essential component of bacterial cell walls. The protein is Succinyl-diaminopimelate desuccinylase of Haemophilus ducreyi (strain 35000HP / ATCC 700724).